The chain runs to 207 residues: MNPSRIRVKMCGMTRSEDIQYAIDLGVDAIGLIFYPKSARNVSLEKARIIVNNIPPFVDIVAVLVNPEQSFVQLIINEIPVQLLQFHGEESSEFCRQFNKPFIKAIHPKTAIQIQSAVDEFFDASAILLDTPSDKGRGGTGLTFDWNIIPENLSKPYILAGGLNESNILEAITMCHPYAVDVCSGIEASPGVKDHLKMSRFIKAIWG.

The protein belongs to the TrpF family.

It carries out the reaction N-(5-phospho-beta-D-ribosyl)anthranilate = 1-(2-carboxyphenylamino)-1-deoxy-D-ribulose 5-phosphate. The protein operates within amino-acid biosynthesis; L-tryptophan biosynthesis; L-tryptophan from chorismate: step 3/5. The chain is N-(5'-phosphoribosyl)anthranilate isomerase from Legionella pneumophila (strain Lens).